The chain runs to 212 residues: Uridine kinase (212 aa).

An ATP-binding site is contributed by 13-20 (GGSGSGKT).

The protein belongs to the uridine kinase family.

The protein localises to the cytoplasm. The catalysed reaction is uridine + ATP = UMP + ADP + H(+). The enzyme catalyses cytidine + ATP = CMP + ADP + H(+). The protein operates within pyrimidine metabolism; CTP biosynthesis via salvage pathway; CTP from cytidine: step 1/3. It functions in the pathway pyrimidine metabolism; UMP biosynthesis via salvage pathway; UMP from uridine: step 1/1. The chain is Uridine kinase from Bacillus mycoides (strain KBAB4) (Bacillus weihenstephanensis).